The following is a 314-amino-acid chain: tRNA dimethylallyltransferase (314 aa).

11–18 (GPTAVGKT) contributes to the ATP binding site. 13-18 (TAVGKT) is a substrate binding site. The segment at 36–39 (DSMQ) is interaction with substrate tRNA.

The protein belongs to the IPP transferase family. Monomer. Requires Mg(2+) as cofactor.

It catalyses the reaction adenosine(37) in tRNA + dimethylallyl diphosphate = N(6)-dimethylallyladenosine(37) in tRNA + diphosphate. Its function is as follows. Catalyzes the transfer of a dimethylallyl group onto the adenine at position 37 in tRNAs that read codons beginning with uridine, leading to the formation of N6-(dimethylallyl)adenosine (i(6)A). The sequence is that of tRNA dimethylallyltransferase from Bacillus anthracis.